Here is a 546-residue protein sequence, read N- to C-terminus: Hydroxylamine reductase (546 aa).

The [4Fe-4S] cluster site is built by Cys-3, Cys-6, Cys-18, and Cys-25. Positions 245, 269, 313, 401, 429, 454, 488, and 490 each coordinate hybrid [4Fe-2O-2S] cluster. Cys-401 carries the post-translational modification Cysteine persulfide.

This sequence belongs to the HCP family. Requires [4Fe-4S] cluster as cofactor. It depends on hybrid [4Fe-2O-2S] cluster as a cofactor.

It localises to the cytoplasm. It catalyses the reaction A + NH4(+) + H2O = hydroxylamine + AH2 + H(+). Its activity is regulated as follows. Inhibited by cyanide and by sulfide and iron reagents such as dithioerythritol, 2,2'-dipyridyl and o-phenanthroline. Functionally, could be involved in assimilation and/or detoxification of hydroxylamine, which is a toxic compound that may be formed during nitrate/nitrite assimilation. Catalyzes the reduction of hydroxylamine to form NH(3) and H(2)O. It has a low reductase activity with FAD, FMN, benzyl viologen and bromphenol blue as electrons donors, but it is not able to use NAD or NADP. In Rhodobacter capsulatus (Rhodopseudomonas capsulata), this protein is Hydroxylamine reductase.